A 148-amino-acid polypeptide reads, in one-letter code: Glutamyl-tRNA(Gln) amidotransferase subunit C, mitochondrial (148 aa).

Belongs to the GatC family. As to quaternary structure, subunit of the heterotrimeric GatCAB amidotransferase (AdT) complex, composed of A, B and C subunits.

It is found in the mitochondrion. It carries out the reaction L-glutamyl-tRNA(Gln) + L-glutamine + ATP + H2O = L-glutaminyl-tRNA(Gln) + L-glutamate + ADP + phosphate + H(+). Allows the formation of correctly charged Gln-tRNA(Gln) through the transamidation of misacylated Glu-tRNA(Gln) in the mitochondria. The reaction takes place in the presence of glutamine and ATP through an activated gamma-phospho-Glu-tRNA(Gln). The chain is Glutamyl-tRNA(Gln) amidotransferase subunit C, mitochondrial from Drosophila simulans (Fruit fly).